A 182-amino-acid polypeptide reads, in one-letter code: Large ribosomal subunit protein uL5 (182 aa).

The protein belongs to the universal ribosomal protein uL5 family. As to quaternary structure, part of the 50S ribosomal subunit; part of the 5S rRNA/L5/L18/L25 subcomplex. Contacts the 5S rRNA and the P site tRNA. Forms a bridge to the 30S subunit in the 70S ribosome.

In terms of biological role, this is one of the proteins that bind and probably mediate the attachment of the 5S RNA into the large ribosomal subunit, where it forms part of the central protuberance. In the 70S ribosome it contacts protein S13 of the 30S subunit (bridge B1b), connecting the 2 subunits; this bridge is implicated in subunit movement. Contacts the P site tRNA; the 5S rRNA and some of its associated proteins might help stabilize positioning of ribosome-bound tRNAs. This is Large ribosomal subunit protein uL5 from Thermus thermophilus (strain ATCC BAA-163 / DSM 7039 / HB27).